The primary structure comprises 256 residues: Trypsin epsilon (256 aa).

The first 22 residues, Met-1 to Gly-22, serve as a signal peptide directing secretion. Positions Leu-23 to Arg-30 are cleaved as a propeptide — activation peptide. The Peptidase S1 domain maps to Ile-31 to Arg-254. Cys-56 and Cys-72 are oxidised to a cystine. Active-site charge relay system residues include His-71 and Asp-116. Disulfide bonds link Cys-180-Cys-197 and Cys-206-Cys-230. Ser-210 acts as the Charge relay system in catalysis.

The protein belongs to the peptidase S1 family.

It localises to the secreted. The protein localises to the extracellular space. It carries out the reaction Preferential cleavage: Arg-|-Xaa, Lys-|-Xaa.. This chain is Trypsin epsilon (epsilonTry), found in Drosophila erecta (Fruit fly).